The sequence spans 37 residues: Glucagon-1 (37 aa).

Belongs to the glucagon family.

The protein localises to the secreted. In terms of biological role, glucagon plays a key role in glucose metabolism and homeostasis. Regulates blood glucose by increasing gluconeogenesis and decreasing glycolysis. The protein is Glucagon-1 of Huso dauricus (Kaluga sturgeon).